A 126-amino-acid polypeptide reads, in one-letter code: SH2 domain-containing protein 1A (126 aa).

In terms of domain architecture, SH2 spans 6–102 (VYHGKISREM…GIVTPLQYPV (97 aa)). The segment at 67 to 92 (ETAPGVHKRFFRKVKNLISAFQKPDQ) is interaction with FYN SH3 domain. Lys89 is modified (N6-acetyllysine). The segment at 100–126 (YPVEKSSARSPQAPTGRRDSDICLKAP) is disordered. Basic and acidic residues predominate over residues 115–126 (GRRDSDICLKAP). Ser119 is subject to Phosphoserine.

As to quaternary structure, interacts with CD84, CD244, LY9, SLAMF1 and FYN. Interacts with NTRK1, NTRK2 and NTRK3.

The protein localises to the cytoplasm. Cytoplasmic adapter regulating receptors of the signaling lymphocytic activation molecule (SLAM) family such as SLAMF1, CD244, LY9, CD84, SLAMF6 and SLAMF7. In SLAM signaling seems to cooperate with SH2D1B/EAT-2. Initially it has been proposed that association with SLAMF1 prevents SLAMF1 binding to inhibitory effectors including INPP5D/SHIP1 and PTPN11/SHP-2. However, by simultaneous interactions, recruits FYN which subsequently phosphorylates and activates SLAMF1. Positively regulates CD244/2B4- and CD84-mediated natural killer (NK) cell functions. Can also promote CD48-, SLAMF6 -, LY9-, and SLAMF7-mediated NK cell activation. In the context of NK cell-mediated cytotoxicity enhances conjugate formation with target cells. May also regulate the activity of the neurotrophin receptors NTRK1, NTRK2 and NTRK3. This Rattus norvegicus (Rat) protein is SH2 domain-containing protein 1A (Sh2d1a).